The sequence spans 566 residues: Chromatin assembly factor 1 subunit B (566 aa).

WD repeat units lie at residues 11 to 54 (HNKE…DGKA), 64 to 103 (RHTKAVNVVRFSPSGEVLASGGDDAVILLWKLNDSKELEP), 127 to 166 (GHLEDVYDICWTSDGNYMASASVDNTAIMWDVVKGQKVSI), 169 to 208 (EHKSYVQGITWDPLGQYIATLSCDRVLRVYNTQTKRVAFN), 228 to 279 (FHDD…RPMG), and 351 to 392 (IHYH…IPLK). Disordered regions lie at residues 411–481 (KSQP…NQPR) and 501–566 (IPLK…KPNK). 2 stretches are compositionally biased toward polar residues: residues 425 to 437 (TEGTSLSTPTLQP) and 469 to 478 (QPASQSTKVN).

It belongs to the WD repeat HIR1 family. In terms of assembly, interacts with CHAF1A.

The protein localises to the nucleus. Functionally, acts as a component of the histone chaperone complex chromatin assembly factor 1 (CAF-1), which assembles histone octamers onto DNA during replication and repair. CAF-1 performs the first step of the nucleosome assembly process, bringing newly synthesized histones H3 and H4 to replicating DNA; histones H2A/H2B can bind to this chromatin precursor subsequent to DNA replication to complete the histone octamer. The sequence is that of Chromatin assembly factor 1 subunit B (CHAF1B) from Gallus gallus (Chicken).